An 814-amino-acid chain; its full sequence is Valine--tRNA ligase (814 aa).

The 'HIGH' region motif lies at 46–56 (PTVSGQLHIGH). Residues 536-540 (KMSKS) carry the 'KMSKS' region motif. K539 is an ATP binding site.

Belongs to the class-I aminoacyl-tRNA synthetase family. ValS type 2 subfamily. In terms of assembly, monomer.

The protein resides in the cytoplasm. It catalyses the reaction tRNA(Val) + L-valine + ATP = L-valyl-tRNA(Val) + AMP + diphosphate. Its function is as follows. Catalyzes the attachment of valine to tRNA(Val). As ValRS can inadvertently accommodate and process structurally similar amino acids such as threonine, to avoid such errors, it has a 'posttransfer' editing activity that hydrolyzes mischarged Thr-tRNA(Val) in a tRNA-dependent manner. The protein is Valine--tRNA ligase of Rickettsia typhi (strain ATCC VR-144 / Wilmington).